We begin with the raw amino-acid sequence, 1397 residues long: MAQTGEDVDKAKSFQVEFACGNGVDDEEKLRSQWATVERLPTFKRVTTALLHTGDDSSDIIDVTKLEDAERRLLIEKLVKQIEADNLRLLRKIRKRIDEVGIELPTVEVRFNDLSVEAECQVVHGKPIPTLWNTIKGSLSKFVCSKKETKIGILKGVSGIVRPGRMTLLLGPPGCGKTTLLQALSGRLSHSVKVGGKVSYNGCLLSEFIPEKTSSYISQNDLHIPELSVRETLDFSACCQGIGSRMEIMKEISRREKLKEIVPDPDIDAYMKAISVEGLKNSMQTDYILKILGLDICADTRAGDATRPGISGGQKRRLTTGEIVVGPATTLLMDEISNGLDSSTTFQIVSCLQQLAHIAGATILISLLQPAPETFELFDDVILLGEGKIIYHAPRADICKFFEGCGFKCPERKGVADFLQEVMSRKDQEQYWCHRSKPYSYISVDSFIKKFNESNLGFLLKEELSKPFDKSQTRKDSLCFRKYSLSKWEMLKACSRREILLMKRNSFIYLFKSGLLVFNALVTMTVFLQAGATRDARHGNYLMGSMFTALFRLLADGLPELTLTISRLGVFCKQKDLYFYPAWAYAIPSIILRIPLSVLDSFIWTVLTYYVIGYSPEVGRFFRHFIILLTFHLSCISMFRAIASICRTFVACSITGAISVLLLALFGGFVIPKSSMPTWLGWGFWLSPLSYAEIGLTANEFFSPRWRKLTSGNITAGEQVLDVRGLNFGRHSYWTAFGALVGFVLFFNALYTLALTYRNNPQRSRAIVSHGKNSQCSEEDFKPCPEITSRAKTGKVILPFKPLTVTFQNVQYYIETPQGKTRQLLFDITGALKPGVLTSLMGVSGAGKTTLLDVLSGRKTRGIIKGEIRVGGYPKVQETFARVSGYCEQFDIHSPNITVEESLKYSAWLRLPYNIDAKTKNELVKEVLETVELEDIKDSMVGLPGISGLSTEQRKRLTIAVELVSNPSIIFLDEPTTGLDARAAAIVMRAVKNVAETGRTVVCTIHQPSIDIFETFDELILMKDGGQLVYYGPLGKHSSKVIKYFESIPGVPKVQKNCNPATWMLDITCKSAEHRLGMDFAQAYKDSTLYKENKMVVEQLSSASLGSEALSFPSRYSQTGWGQLKACLWKQHCSYWRNPSHNLTRIVFILLNSLLCSLLFWQKAKDINNQQDLFSIFGSMYTIVIFSGINNCATVMNFIATERNVFYRERFARMYSSWAYSFSQVLVEVPYSLLQSLLCTIIVYPMIGYHMSVYKMFWSLYSIFCSLLIFNYCGMLMVALTPNIHMALTLRSTFFSMVNLFAGFVMPKQKIPKWWIWMYYLSPTSWVLEGLLSSQYGDVEKEITVFGEKKSVSAFLEDYFGYKHDSLAVVAFVLIAFPIIVASLFAFFMSKLNFQKK.

The region spanning 138 to 411 (SLSKFVCSKK…FEGCGFKCPE (274 aa)) is the ABC transporter 1 domain. 171–178 (GPPGCGKT) contacts ATP. In terms of domain architecture, ABC transmembrane type-2 1 spans 489–701 (EMLKACSRRE…AEIGLTANEF (213 aa)). Transmembrane regions (helical) follow at residues 507–527 (FIYL…MTVF), 549–570 (ALFR…RLGV), 594–614 (IPLS…VIGY), 625–645 (FIIL…IASI), 651–671 (ACSI…GFVI), and 735–755 (TAFG…TLAL). Residues 805–1050 (VTFQNVQYYI…VIKYFESIPG (246 aa)) form the ABC transporter 2 domain. Residue 842–849 (GVSGAGKT) coordinates ATP. Residues 1122-1336 (GQLKACLWKQ…VLEGLLSSQY (215 aa)) enclose the ABC transmembrane type-2 2 domain. The next 7 helical transmembrane spans lie at 1141-1161 (HNLT…LLFW), 1173-1193 (LFSI…NNCA), 1229-1249 (VPYS…MIGY), 1260-1280 (LYSI…MVAL), 1286-1306 (MALT…GFVM), 1314-1334 (WWIW…LLSS), and 1369-1389 (VVAF…AFFM).

It belongs to the ABC transporter superfamily. ABCG family. PDR (TC 3.A.1.205) subfamily. Confined to roots.

It is found in the membrane. May be a general defense protein. This Arabidopsis thaliana (Mouse-ear cress) protein is ABC transporter G family member 41 (ABCG41).